Here is an 87-residue protein sequence, read N- to C-terminus: MHTNWQVCSLVVQAKSERISDISTQLNAFPGCEVAVSDAPSGQLIVVVEAEDSETLIQTIESVRNVEGVLAVSLVYHQQEEQGEETP.

This sequence belongs to the NapD family. As to quaternary structure, interacts with the cytoplasmic NapA precursor.

Its subcellular location is the cytoplasm. Its function is as follows. Chaperone for NapA, the catalytic subunit of the periplasmic nitrate reductase. It binds directly and specifically to the twin-arginine signal peptide of NapA, preventing premature interaction with the Tat translocase and premature export. In Escherichia coli O157:H7, this protein is Chaperone NapD.